We begin with the raw amino-acid sequence, 293 residues long: Proteinase T (293 aa).

Positions 1–12 are excised as a propeptide; that stretch reads EFIEQDAVVTIS. In terms of domain architecture, Peptidase S8 spans 19–293; that stretch reads PWGLARISSQ…VLINNGEGSA (275 aa). 2 disulfide bridges follow: cysteine 46–cysteine 137 and cysteine 192–cysteine 262. Residues aspartate 51, histidine 83, and serine 238 each act as charge relay system in the active site.

Belongs to the peptidase S8 family.

Functionally, serine proteinase. This Parengyodontium album (Tritirachium album) protein is Proteinase T (PROT).